A 259-amino-acid polypeptide reads, in one-letter code: Ribonuclease PH (259 aa).

Phosphate contacts are provided by residues R88 and 126–128 (GTR).

Belongs to the RNase PH family. In terms of assembly, homohexameric ring arranged as a trimer of dimers.

It carries out the reaction tRNA(n+1) + phosphate = tRNA(n) + a ribonucleoside 5'-diphosphate. Its function is as follows. Phosphorolytic 3'-5' exoribonuclease that plays an important role in tRNA 3'-end maturation. Removes nucleotide residues following the 3'-CCA terminus of tRNAs; can also add nucleotides to the ends of RNA molecules by using nucleoside diphosphates as substrates, but this may not be physiologically important. Probably plays a role in initiation of 16S rRNA degradation (leading to ribosome degradation) during starvation. The polypeptide is Ribonuclease PH (Mycobacterium bovis (strain BCG / Pasteur 1173P2)).